The primary structure comprises 196 residues: Ribosome maturation factor RimP (196 aa).

The protein belongs to the RimP family.

The protein localises to the cytoplasm. Functionally, required for maturation of 30S ribosomal subunits. The chain is Ribosome maturation factor RimP from Dinoroseobacter shibae (strain DSM 16493 / NCIMB 14021 / DFL 12).